We begin with the raw amino-acid sequence, 454 residues long: Bifunctional protein GlmU (454 aa).

The tract at residues 1–225 (MNIVILAAGM…LWETLGVNSK (225 aa)) is pyrophosphorylase. Residues 6-9 (LAAG), K20, Q71, 76-77 (GT), 98-100 (YGD), G135, E150, N165, and N223 contribute to the UDP-N-acetyl-alpha-D-glucosamine site. Residue D100 coordinates Mg(2+). N223 provides a ligand contact to Mg(2+). Residues 226 to 246 (VQLAEVERIHQRNLAQRLLET) are linker. Positions 247-454 (GVTLADPARI…WQRPVKKAKQ (208 aa)) are N-acetyltransferase. UDP-N-acetyl-alpha-D-glucosamine-binding residues include R329 and K347. Catalysis depends on H359, which acts as the Proton acceptor. Residues Y362 and N373 each contribute to the UDP-N-acetyl-alpha-D-glucosamine site. Acetyl-CoA-binding positions include A376, 382 to 383 (NY), S401, A419, and R436.

The protein in the N-terminal section; belongs to the N-acetylglucosamine-1-phosphate uridyltransferase family. This sequence in the C-terminal section; belongs to the transferase hexapeptide repeat family. In terms of assembly, homotrimer. The cofactor is Mg(2+).

It localises to the cytoplasm. The enzyme catalyses alpha-D-glucosamine 1-phosphate + acetyl-CoA = N-acetyl-alpha-D-glucosamine 1-phosphate + CoA + H(+). The catalysed reaction is N-acetyl-alpha-D-glucosamine 1-phosphate + UTP + H(+) = UDP-N-acetyl-alpha-D-glucosamine + diphosphate. It participates in nucleotide-sugar biosynthesis; UDP-N-acetyl-alpha-D-glucosamine biosynthesis; N-acetyl-alpha-D-glucosamine 1-phosphate from alpha-D-glucosamine 6-phosphate (route II): step 2/2. Its pathway is nucleotide-sugar biosynthesis; UDP-N-acetyl-alpha-D-glucosamine biosynthesis; UDP-N-acetyl-alpha-D-glucosamine from N-acetyl-alpha-D-glucosamine 1-phosphate: step 1/1. It functions in the pathway bacterial outer membrane biogenesis; LPS lipid A biosynthesis. Catalyzes the last two sequential reactions in the de novo biosynthetic pathway for UDP-N-acetylglucosamine (UDP-GlcNAc). The C-terminal domain catalyzes the transfer of acetyl group from acetyl coenzyme A to glucosamine-1-phosphate (GlcN-1-P) to produce N-acetylglucosamine-1-phosphate (GlcNAc-1-P), which is converted into UDP-GlcNAc by the transfer of uridine 5-monophosphate (from uridine 5-triphosphate), a reaction catalyzed by the N-terminal domain. The sequence is that of Bifunctional protein GlmU from Cupriavidus pinatubonensis (strain JMP 134 / LMG 1197) (Cupriavidus necator (strain JMP 134)).